A 605-amino-acid polypeptide reads, in one-letter code: Protein Spindly (605 aa).

Methionine 1 carries the post-translational modification N-acetylmethionine. A coiled-coil region spans residues 3–442 (TDIVINLRCK…ELKLKYEPEE (440 aa)). Serine 513, serine 515, and serine 555 each carry phosphoserine. Residues 545–581 (LSERSGNTLNSPRLAAESKLQTEVKEGKETASKLEKE) are disordered. Residues 564-581 (LQTEVKEGKETASKLEKE) are compositionally biased toward basic and acidic residues.

This sequence belongs to the Spindly family. As to quaternary structure, interacts with KNTC1 and ZW10. These interactions appear weak and may be transient or indirect. Interacts with dynein intermediate chain and dynactin (DCTN1). Interacts with the catalytically active form of USP45. In terms of processing, monoubiquitinated with'Lys-48' linkage. Deubiquitinated by USP45.

Its subcellular location is the cytoplasm. It is found in the cytoskeleton. The protein localises to the microtubule organizing center. It localises to the centrosome. The protein resides in the chromosome. Its subcellular location is the centromere. It is found in the kinetochore. The protein localises to the nucleus. It localises to the spindle pole. Functionally, required for the localization of dynein and dynactin to the mitotic kintochore. Dynein is believed to control the initial lateral interaction between the kinetochore and spindle microtubules and to facilitate the subsequent formation of end-on kinetochore-microtubule attachments mediated by the NDC80 complex. Also required for correct spindle orientation. Does not appear to be required for the removal of spindle assembly checkpoint (SAC) proteins from the kinetochore upon bipolar spindle attachment. Acts as an adapter protein linking the dynein motor complex to various cargos and converts dynein from a non-processive to a highly processive motor in the presence of dynactin. Facilitates the interaction between dynein and dynactin and activates dynein processivity (the ability to move along a microtubule for a long distance without falling off the track). Plays a role in cell migration. The chain is Protein Spindly from Macaca fascicularis (Crab-eating macaque).